The chain runs to 165 residues: Lipoprotein signal peptidase (165 aa).

2 helical membrane passes run 64-84 and 88-108; these read LGRW…GAWM and GSRL…GNAV. Active-site residues include D118 and D136. A helical transmembrane segment spans residues 128-148; the sequence is SWYVFNVADAGIVAGVAGLLV.

The protein belongs to the peptidase A8 family.

Its subcellular location is the cell inner membrane. It catalyses the reaction Release of signal peptides from bacterial membrane prolipoproteins. Hydrolyzes -Xaa-Yaa-Zaa-|-(S,diacylglyceryl)Cys-, in which Xaa is hydrophobic (preferably Leu), and Yaa (Ala or Ser) and Zaa (Gly or Ala) have small, neutral side chains.. The protein operates within protein modification; lipoprotein biosynthesis (signal peptide cleavage). In terms of biological role, this protein specifically catalyzes the removal of signal peptides from prolipoproteins. The sequence is that of Lipoprotein signal peptidase from Methylobacterium sp. (strain 4-46).